The primary structure comprises 635 residues: DNA mismatch repair protein MutL (635 aa).

The interval 359–399 is disordered; that stretch reads GTNKYAQPEAAKSSAAEQAVARERSSARERAAPAYKEDHPY. The segment covering 364–377 has biased composition (low complexity); the sequence is AQPEAAKSSAAEQA. Over residues 378–399 the composition is skewed to basic and acidic residues; the sequence is VARERSSARERAAPAYKEDHPY.

The protein belongs to the DNA mismatch repair MutL/HexB family.

Its function is as follows. This protein is involved in the repair of mismatches in DNA. It is required for dam-dependent methyl-directed DNA mismatch repair. May act as a 'molecular matchmaker', a protein that promotes the formation of a stable complex between two or more DNA-binding proteins in an ATP-dependent manner without itself being part of a final effector complex. This Yersinia pseudotuberculosis serotype O:1b (strain IP 31758) protein is DNA mismatch repair protein MutL.